We begin with the raw amino-acid sequence, 80 residues long: Raniseptin-2 (80 aa).

Residues 1 to 22 form the signal peptide; it reads MAFLKKSLFLVLFLGIVSLSIC. The propeptide occupies 23–49; that stretch reads EEEKRVGEEEEKQEEENEELSEEELRE. The tract at residues 27 to 46 is disordered; sequence RVGEEEEKQEEENEELSEEE. Acidic residues predominate over residues 30 to 44; sequence EEEEKQEEENEELSE.

It belongs to the frog skin active peptide (FSAP) family. Dermaseptin subfamily. As to expression, expressed by the skin glands.

It is found in the secreted. Has antibacterial activity. This is Raniseptin-2 from Boana raniceps (Chaco tree frog).